The sequence spans 68 residues: Protein SlyX homolog (68 aa).

Belongs to the SlyX family.

This Ectopseudomonas mendocina (strain ymp) (Pseudomonas mendocina) protein is Protein SlyX homolog.